A 153-amino-acid polypeptide reads, in one-letter code: NAD(P)H-quinone oxidoreductase subunit N (153 aa).

It belongs to the complex I NdhN subunit family. NDH-1 can be composed of about 15 different subunits; different subcomplexes with different compositions have been identified which probably have different functions.

It localises to the cellular thylakoid membrane. It catalyses the reaction a plastoquinone + NADH + (n+1) H(+)(in) = a plastoquinol + NAD(+) + n H(+)(out). The enzyme catalyses a plastoquinone + NADPH + (n+1) H(+)(in) = a plastoquinol + NADP(+) + n H(+)(out). In terms of biological role, NDH-1 shuttles electrons from an unknown electron donor, via FMN and iron-sulfur (Fe-S) centers, to quinones in the respiratory and/or the photosynthetic chain. The immediate electron acceptor for the enzyme in this species is believed to be plastoquinone. Couples the redox reaction to proton translocation, and thus conserves the redox energy in a proton gradient. Cyanobacterial NDH-1 also plays a role in inorganic carbon-concentration. This Prochlorococcus marinus (strain MIT 9303) protein is NAD(P)H-quinone oxidoreductase subunit N.